The primary structure comprises 284 residues: tRNA uridine(34) hydroxylase (284 aa).

Residues 132-226 (AGRPVVMLDT…YFEEVGGAHY (95 aa)) enclose the Rhodanese domain. Catalysis depends on cysteine 186, which acts as the Cysteine persulfide intermediate.

It belongs to the TrhO family.

The catalysed reaction is uridine(34) in tRNA + AH2 + O2 = 5-hydroxyuridine(34) in tRNA + A + H2O. Functionally, catalyzes oxygen-dependent 5-hydroxyuridine (ho5U) modification at position 34 in tRNAs. The chain is tRNA uridine(34) hydroxylase from Burkholderia cenocepacia (strain HI2424).